The sequence spans 492 residues: Serine/threonine protein phosphatase 2A 57 kDa regulatory subunit B' theta isoform (492 aa).

Positions 1–63 (MWKQILSKLP…GFKEGNLKGN (63 aa)) are disordered. Low complexity predominate over residues 16 to 39 (KNHSSSSSSTSKSSDNGASKSGNS). Positions 490-492 (SSL) match the Microbody targeting signal motif.

The protein belongs to the phosphatase 2A regulatory subunit B56 family. As to quaternary structure, PP2A consists of a common heteromeric enzyme, composed of a catalytic subunit (subunits C), a constant regulatory subunit (subunit A), and a variety of regulatory subunits such as subunits B (the R2/B/PR55/B55, R3/B''/PR72/PR130/PR59 and R5/B'/B56 families). Interacts with BZR1. Interacts with PP2A2, PP2A5 and PP2AA2. Highly expressed in dry seeds. Expressed in roots, cotyledons, rosette leaves and flowers.

It is found in the cytoplasm. It localises to the cytosol. Its subcellular location is the peroxisome. The B regulatory subunit may modulate substrate selectivity and catalytic activity, and may also direct the localization of the catalytic enzyme to a particular subcellular compartment. Associates with the serine/threonine-protein phosphatase PP2A catalytic subunit C and regulatory subunit A to positively regulates beta-oxidation of fatty acids and protoauxins in peroxisomes by dephosphorylating peroxisomal beta-oxidation-related proteins. Required for the formation of the PP2A holoenzyme that negatively regulates brassinosteroid signaling by dephosphorylating and inactivating BRI1 in the cytoplasm. This is Serine/threonine protein phosphatase 2A 57 kDa regulatory subunit B' theta isoform (B'THETA) from Arabidopsis thaliana (Mouse-ear cress).